The primary structure comprises 272 residues: Shikimate dehydrogenase (NADP(+)) (272 aa).

Shikimate-binding positions include 14-16 (SKS) and Thr61. Lys65 acts as the Proton acceptor in catalysis. NADP(+) is bound at residue Glu77. Shikimate is bound by residues Asn86 and Asp102. Residues 126–130 (GAGGA), 149–154 (NRTVSR), and Met213 each bind NADP(+). Tyr215 is a binding site for shikimate. Gly237 contacts NADP(+).

This sequence belongs to the shikimate dehydrogenase family. In terms of assembly, homodimer.

It catalyses the reaction shikimate + NADP(+) = 3-dehydroshikimate + NADPH + H(+). Its pathway is metabolic intermediate biosynthesis; chorismate biosynthesis; chorismate from D-erythrose 4-phosphate and phosphoenolpyruvate: step 4/7. Functionally, involved in the biosynthesis of the chorismate, which leads to the biosynthesis of aromatic amino acids. Catalyzes the reversible NADPH linked reduction of 3-dehydroshikimate (DHSA) to yield shikimate (SA). The protein is Shikimate dehydrogenase (NADP(+)) of Shigella flexneri.